A 930-amino-acid polypeptide reads, in one-letter code: Serine/threonine-protein kinase ATG1 (930 aa).

The region spanning 23–326 (FIIDREIGKG…FENFFAHHVV (304 aa)) is the Protein kinase domain. ATP contacts are provided by residues 29–37 (IGKGSFAQV) and K52. Residue D166 is the Proton acceptor of the active site. Disordered regions lie at residues 336–468 (DDIP…TEEE), 504–563 (GQNN…SASP), 853–874 (ISSGKEIAKDATQEGSDLDTEE), and 904–930 (NQAKHVSAMRRLSGDVTPRSVPSYGST). The span at 337–350 (DIPKPPKRELETIR) shows a compositional bias: basic and acidic residues. Over residues 377-393 (SPKSPRSSPRSSTVNSS) the composition is skewed to low complexity. Polar residues-rich tracts occupy residues 400 to 417 (RQSQNAERRLSISSHNSG) and 504 to 531 (GQNNSSAKSSPLQRRYTQQGSATSTTGA). Positions 629 to 897 (AAQAIEEFAT…RLNMVRKKQQ (269 aa)) are ATG13-binding.

This sequence belongs to the protein kinase superfamily. Ser/Thr protein kinase family. APG1/unc-51/ULK1 subfamily. In terms of assembly, homodimer. Dimerization requires the presence of ATG13. Forms a ternary complex with ATG13 and ATG17.

Its subcellular location is the cytoplasm. It localises to the preautophagosomal structure membrane. It catalyses the reaction L-seryl-[protein] + ATP = O-phospho-L-seryl-[protein] + ADP + H(+). The catalysed reaction is L-threonyl-[protein] + ATP = O-phospho-L-threonyl-[protein] + ADP + H(+). In terms of biological role, serine/threonine protein kinase involved in the cytoplasm to vacuole transport (Cvt) and found to be essential in autophagy, where it is required for the formation of autophagosomes. Involved in the clearance of protein aggregates which cannot be efficiently cleared by the proteasome. Required for selective autophagic degradation of the nucleus (nucleophagy) as well as for mitophagy which contributes to regulate mitochondrial quantity and quality by eliminating the mitochondria to a basal level to fulfill cellular energy requirements and preventing excess ROS production. Also involved in endoplasmic reticulum-specific autophagic process, in selective removal of ER-associated degradation (ERAD) substrates. Plays a key role in ATG9 and ATG23 cycling through the pre-autophagosomal structure and is necessary to promote ATG18 binding to ATG9 through phosphorylation of ATG9. Catalyzes phosphorylation of ATG4, decreasing the interaction between ATG4 and ATG8 and impairing deconjugation of PE-conjugated forms of ATG8. Contributes to conidiation by regulating the conidial levels of the conidiation-related protein CP15 and mediates fungal oxidation resistance by controlling total superoxide dismutase (SOD) activity. The sequence is that of Serine/threonine-protein kinase ATG1 from Beauveria bassiana (strain ARSEF 2860) (White muscardine disease fungus).